The sequence spans 209 residues: MTEKLKNSKEVIAYIAECFPKCFTLEGEAKPLKIGIFQDLAERLNEDEKVSKTQLRAALRQYTSSWRYLHGVKPGAVRVDLDGNPCGELEEEHVEHAKATLAESKAKVQARRKEQAQKAREEGKAKAKPAANKKPQQPRRTNKPKVQKPTKPVETRALNADEITVGNAVNVNMGKGNMAATIVEINKDDVRVQLANGLQMVVKAEHLRA.

Residues 101–155 (LAESKAKVQARRKEQAQKAREEGKAKAKPAANKKPQQPRRTNKPKVQKPTKPVET) form a disordered region. Residues 111 to 125 (RRKEQAQKAREEGKA) show a composition bias toward basic and acidic residues. Residues 136 to 148 (QQPRRTNKPKVQK) are compositionally biased toward basic residues.

It belongs to the ProQ family.

Its subcellular location is the cytoplasm. Its function is as follows. RNA chaperone with significant RNA binding, RNA strand exchange and RNA duplexing activities. This is RNA chaperone ProQ from Vibrio parahaemolyticus serotype O3:K6 (strain RIMD 2210633).